The following is a 156-amino-acid chain: Small ribosomal subunit protein uS7 (156 aa).

This sequence belongs to the universal ribosomal protein uS7 family. Part of the 30S ribosomal subunit. Contacts proteins S9 and S11.

Functionally, one of the primary rRNA binding proteins, it binds directly to 16S rRNA where it nucleates assembly of the head domain of the 30S subunit. Is located at the subunit interface close to the decoding center, probably blocks exit of the E-site tRNA. This Gloeothece citriformis (strain PCC 7424) (Cyanothece sp. (strain PCC 7424)) protein is Small ribosomal subunit protein uS7.